The chain runs to 100 residues: NADH-quinone oxidoreductase subunit K (100 aa).

Helical transmembrane passes span Leu-4–Ile-24, Leu-28–Val-48, and Val-60–Leu-80.

It belongs to the complex I subunit 4L family. NDH-1 is composed of 13 different subunits. Subunits NuoA, H, J, K, L, M, N constitute the membrane sector of the complex.

The protein localises to the cell inner membrane. The enzyme catalyses a quinone + NADH + 5 H(+)(in) = a quinol + NAD(+) + 4 H(+)(out). NDH-1 shuttles electrons from NADH, via FMN and iron-sulfur (Fe-S) centers, to quinones in the respiratory chain. The immediate electron acceptor for the enzyme in this species is believed to be ubiquinone. Couples the redox reaction to proton translocation (for every two electrons transferred, four hydrogen ions are translocated across the cytoplasmic membrane), and thus conserves the redox energy in a proton gradient. The protein is NADH-quinone oxidoreductase subunit K of Enterobacter sp. (strain 638).